A 112-amino-acid chain; its full sequence is Transmembrane protein 14C (112 aa).

Helical transmembrane passes span 7–27, 32–52, 62–82, and 86–106; these read VVPL…GGII, AGSV…SLGA, VWVF…RFYH, and FMPA…VGVS.

The protein belongs to the TMEM14 family.

The protein localises to the mitochondrion membrane. Required for normal heme biosynthesis. This is Transmembrane protein 14C (TMEM14C) from Pongo abelii (Sumatran orangutan).